The sequence spans 279 residues: Movement protein (279 aa).

Positions 256–266 are enriched in low complexity; that stretch reads PPIAIGSPSAS. Residues 256 to 279 are disordered; the sequence is PPIAIGSPSASRNNSFRSQVVNGL. Residues 267-279 show a composition bias toward polar residues; sequence RNNSFRSQVVNGL.

This sequence belongs to the cucumovirus movement protein family.

The protein resides in the host cell junction. The protein localises to the host plasmodesma. Functionally, transports viral genome to neighboring plant cells directly through plasmosdesmata, without any budding. The movement protein allows efficient cell to cell propagation, by bypassing the host cell wall barrier. Acts by forming a tubular structure at the host plasmodesmata, enlarging it enough to allow free passage of virion capsids. In Cucumis sativus (Cucumber), this protein is Movement protein.